The following is a 350-amino-acid chain: MAAGGNGAGGDTRAAFARIYKTLKEELLTDPAFEFTEESRQWIDRMVDYNVLGGKCNRGLSVVDSYKLLKGADALGEEETFLACTLGWCIEWLQAFFLVLDDIMDDSHTRRGQPCWFRVPQVGLIAANDGIILRNHISRILRRHFKGKPYYADLLDLFNEVEFKTASGQLLDLITTHEGEKDLTKYNITVHGRIVQYKTAYYSFYLPVACALLLSGENLDNYGDVENILVEMGTYFQVQDDYLDCYGDPEFIGKIGTDIEDYKCSWLVVQALERADESQKRILFENYGKKDPACVAKVKNLYKELDLEAVFQEYENESYKKLIADIEAQPSIAVQKVLKSFLHKIYKRQK.

Positions 55, 58, and 94 each coordinate isopentenyl diphosphate. 2 residues coordinate Mg(2+): Asp-101 and Asp-105. Residue Arg-110 coordinates dimethylallyl diphosphate. Arg-111 contributes to the isopentenyl diphosphate binding site. Residues Lys-198, Thr-199, Gln-237, Lys-254, and Lys-263 each contribute to the dimethylallyl diphosphate site.

It belongs to the FPP/GGPP synthase family. Requires Mg(2+) as cofactor.

It localises to the cytoplasm. It catalyses the reaction isopentenyl diphosphate + dimethylallyl diphosphate = (2E)-geranyl diphosphate + diphosphate. The catalysed reaction is isopentenyl diphosphate + (2E)-geranyl diphosphate = (2E,6E)-farnesyl diphosphate + diphosphate. It functions in the pathway isoprenoid biosynthesis; farnesyl diphosphate biosynthesis; farnesyl diphosphate from geranyl diphosphate and isopentenyl diphosphate: step 1/1. It participates in isoprenoid biosynthesis; geranyl diphosphate biosynthesis; geranyl diphosphate from dimethylallyl diphosphate and isopentenyl diphosphate: step 1/1. In terms of biological role, catalyzes the sequential condensation of isopentenyl pyrophosphate with the allylic pyrophosphates, dimethylallyl pyrophosphate, and then with the resultant geranylpyrophosphate to the ultimate product farnesyl pyrophosphate. This Zea mays (Maize) protein is Farnesyl pyrophosphate synthase (FPS).